The chain runs to 353 residues: Photosystem II protein D1 (353 aa).

At Thr-2 the chain carries N-acetylthreonine. Phosphothreonine is present on Thr-2. The next 3 helical transmembrane spans lie at 29–46 (YIGW…TATS), 118–133 (HFLL…EWEL), and 142–156 (WIAV…AATA). His-118 provides a ligand contact to chlorophyll a. Tyr-126 is a pheophytin a binding site. [CaMn4O5] cluster-binding residues include Asp-170 and Glu-189. Residues 197–218 (FHMLGVAGVFGGSLFSAMHGSL) traverse the membrane as a helical segment. His-198 contacts chlorophyll a. Residues His-215 and 264–265 (SF) contribute to the a quinone site. His-215 contributes to the Fe cation binding site. Residue His-272 coordinates Fe cation. A helical transmembrane segment spans residues 274 to 288 (FLAAWPVVGIWFTAL). [CaMn4O5] cluster contacts are provided by His-332, Glu-333, Asp-342, and Ala-344. Residues 345-353 (AIEAPSTNG) constitute a propeptide that is removed on maturation.

The protein belongs to the reaction center PufL/M/PsbA/D family. PSII is composed of 1 copy each of membrane proteins PsbA, PsbB, PsbC, PsbD, PsbE, PsbF, PsbH, PsbI, PsbJ, PsbK, PsbL, PsbM, PsbT, PsbX, PsbY, PsbZ, Psb30/Ycf12, at least 3 peripheral proteins of the oxygen-evolving complex and a large number of cofactors. It forms dimeric complexes. The cofactor is The D1/D2 heterodimer binds P680, chlorophylls that are the primary electron donor of PSII, and subsequent electron acceptors. It shares a non-heme iron and each subunit binds pheophytin, quinone, additional chlorophylls, carotenoids and lipids. D1 provides most of the ligands for the Mn4-Ca-O5 cluster of the oxygen-evolving complex (OEC). There is also a Cl(-1) ion associated with D1 and D2, which is required for oxygen evolution. The PSII complex binds additional chlorophylls, carotenoids and specific lipids.. Tyr-161 forms a radical intermediate that is referred to as redox-active TyrZ, YZ or Y-Z. Post-translationally, C-terminally processed by CTPA; processing is essential to allow assembly of the oxygen-evolving complex and thus photosynthetic growth.

The protein localises to the plastid. It localises to the chloroplast thylakoid membrane. It catalyses the reaction 2 a plastoquinone + 4 hnu + 2 H2O = 2 a plastoquinol + O2. In terms of biological role, photosystem II (PSII) is a light-driven water:plastoquinone oxidoreductase that uses light energy to abstract electrons from H(2)O, generating O(2) and a proton gradient subsequently used for ATP formation. It consists of a core antenna complex that captures photons, and an electron transfer chain that converts photonic excitation into a charge separation. The D1/D2 (PsbA/PsbD) reaction center heterodimer binds P680, the primary electron donor of PSII as well as several subsequent electron acceptors. The polypeptide is Photosystem II protein D1 (Gossypium barbadense (Sea Island cotton)).